The primary structure comprises 250 residues: Glutathione transferase omega-1 (250 aa).

The GST N-terminal domain maps to 21-101 (SKGSFRVYNM…YLDDAFPETR (81 aa)). Residue C33 is the Nucleophile of the active site. Residues K60 and 85 to 86 (ES) each bind glutathione. Residues 106–234 (DPYEKVQQKL…TQSLEHGAAF (129 aa)) form the GST C-terminal domain.

This sequence belongs to the GST superfamily. Omega family. Homodimer. In terms of tissue distribution, expressed in the intestinal cells.

The protein resides in the cytoplasm. The catalysed reaction is RX + glutathione = an S-substituted glutathione + a halide anion + H(+). It catalyses the reaction L-dehydroascorbate + 2 glutathione = glutathione disulfide + L-ascorbate. It carries out the reaction methylarsonate + 2 glutathione + H(+) = methylarsonous acid + glutathione disulfide + H2O. Functionally, exhibits glutathione-dependent thiol transferase activity. Has dehydroascorbate reductase activity and may contribute to the recycling of ascorbic acid. Participates in the biotransformation of inorganic arsenic and reduces monomethylarsonic acid (MMA). Protects against environmental stress and oxidative stress. The protein is Glutathione transferase omega-1 (gsto-1) of Caenorhabditis elegans.